Here is a 1411-residue protein sequence, read N- to C-terminus: Tectonin beta-propeller repeat-containing protein 2 (1411 aa).

WD repeat units lie at residues 23-66, 67-114, 115-161, 162-203, 204-265, 266-309, and 310-343; these read IPTK…HLNQ, MRKY…PGRN, KQLR…LDQG, LCNS…EKSV, RQIG…AGGV, KPFE…EYSI, and YLLD…FFLK. Disordered stretches follow at residues 379-439, 463-542, 579-637, and 758-779; these read QAEK…GSQP, VKRK…QENT, RELL…GPQS, and YAHG…PSCS. Positions 400–420 are enriched in low complexity; the sequence is SSVASEPRSRSSSLNSTDSGS. 4 stretches are compositionally biased toward polar residues: residues 475 to 489, 496 to 542, 608 to 621, and 763 to 779; these read GSRS…STPC, SPQS…QENT, PNST…QDSS, and PSSS…PSCS. 6 TECPR repeats span residues 945-976, 994-1027, 1179-1209, 1226-1259, 1279-1310, and 1322-1353; these read NVVW…KCDI, QTLW…WQVS, DALW…TRLD, QHIW…IMIE, QMLW…EHVP, and RTVW…KKIP. Positions 1388–1411 are disordered; the sequence is HGTQKSSQAAMPHPEDLEDEWEVI.

The protein belongs to the WD repeat KIAA0329 family. Interacts with the ATG8 family members GABARAP, GABARAPL1, GABARAPL2, MAP1LC3B and MAP1LC3C. In terms of tissue distribution, detected in skin fibroblast (at protein level).

Probably plays a role as positive regulator of autophagy. This chain is Tectonin beta-propeller repeat-containing protein 2 (TECPR2), found in Homo sapiens (Human).